We begin with the raw amino-acid sequence, 89 residues long: Phosphocarrier protein HPr (89 aa).

The HPr domain maps to 2–89 (AKFSAIITDK…TMIDTALIQG (88 aa)). His15 serves as the catalytic Pros-phosphohistidine intermediate. Ser46 carries the post-translational modification Phosphoserine; by HPrK/P.

The protein belongs to the HPr family.

It localises to the cytoplasm. Its activity is regulated as follows. Phosphorylation on Ser-46 inhibits the phosphoryl transfer from enzyme I to HPr. In terms of biological role, general (non sugar-specific) component of the phosphoenolpyruvate-dependent sugar phosphotransferase system (sugar PTS). This major carbohydrate active-transport system catalyzes the phosphorylation of incoming sugar substrates concomitantly with their translocation across the cell membrane. The phosphoryl group from phosphoenolpyruvate (PEP) is transferred to the phosphoryl carrier protein HPr by enzyme I. Phospho-HPr then transfers it to the PTS EIIA domain. Functionally, P-Ser-HPr interacts with the catabolite control protein A (CcpA), forming a complex that binds to DNA at the catabolite response elements cre, operator sites preceding a large number of catabolite-regulated genes. Thus, P-Ser-HPr is a corepressor in carbon catabolite repression (CCR), a mechanism that allows bacteria to coordinate and optimize the utilization of available carbon sources. P-Ser-HPr also plays a role in inducer exclusion, in which it probably interacts with several non-PTS permeases and inhibits their transport activity. The protein is Phosphocarrier protein HPr (ptsH) of Mycoplasma capricolum subsp. capricolum (strain California kid / ATCC 27343 / NCTC 10154).